Reading from the N-terminus, the 113-residue chain is uncharacterized protein (113 aa).

Disordered stretches follow at residues 1 to 22 and 90 to 113; these read MGEHAIKRHMRQRKPTKHPLAQ and DGRHTTESSFEHSSPSRSPQSDDL. Residues 90–99 show a composition bias toward basic and acidic residues; that stretch reads DGRHTTESSF. The segment covering 100 to 113 has biased composition (low complexity); it reads EHSSPSRSPQSDDL.

This is an uncharacterized protein from Mycobacterium tuberculosis (strain CDC 1551 / Oshkosh).